The sequence spans 265 residues: Apolipoprotein A-I (265 aa).

The first 18 residues, 1 to 18 (MKAVVLTLAVLFLTGSQA), serve as a signal peptide directing secretion. A run of 2 repeats spans residues 67 to 88 (LKLVDNWDTLGSTFQKVHEHLG) and 89 to 110 (PVAQEFWEKLEKETEELRREIN). The interval 67–265 (LKLVDNWDTL…IDEAAKKLTA (199 aa)) is 10 X approximate tandem repeats. The 3; half-length repeat unit spans residues 111–121 (KDLEDVRQKTQ). A run of 5 repeats spans residues 122–143 (PFLDEIQKKWQEDLERYRQKVE), 144–165 (PLSAQLREGARQKLMELQEQVT), 166–187 (PLGEDLRDSVRAYADTLRTQLA), 188–209 (PYSEQMRKTLGARLEAIKEGGS), and 210–231 (ASLAEYHAKASEQLSALGEKAK). Position 193 is a methionine sulfoxide (methionine 193). The 9; half-length repeat unit spans residues 232-242 (PVLEDIHQGLM). Methionine sulfoxide occurs at positions 242 and 244. Copy 10 of the repeat occupies 243-265 (PMWESFKTGVLNVIDEAAKKLTA).

The protein belongs to the apolipoprotein A1/A4/E family. Homodimer. Interacts with APOA1BP and CLU. Component of a sperm activating protein complex (SPAP), consisting of APOA1, an immunoglobulin heavy chain, an immunoglobulin light chain and albumin. Interacts with NDRG1. Interacts with SCGB3A2. Interacts with NAXE and YJEFN3. Post-translationally, glycosylated. Palmitoylated. In terms of processing, phosphorylation sites are present in the extracellular medium. In terms of tissue distribution, major protein of plasma HDL, also found in chylomicrons.

Its subcellular location is the secreted. Functionally, participates in the reverse transport of cholesterol from tissues to the liver for excretion by promoting cholesterol efflux from tissues and by acting as a cofactor for the lecithin cholesterol acyltransferase (LCAT). As part of the SPAP complex, activates spermatozoa motility. The sequence is that of Apolipoprotein A-I (APOA1) from Tupaia belangeri (Common tree shrew).